Here is a 388-residue protein sequence, read N- to C-terminus: Protein TsgA homolog (388 aa).

Transmembrane regions (helical) follow at residues 12–32 (CISF…GIFL), 51–71 (TFLN…TNII), 77–97 (LIFG…SHNL), 102–122 (ISMF…TYII), 137–157 (LTDS…ALII), 163–183 (WYWV…ITIN), 203–223 (FSIL…LSFI), 246–266 (SAFW…LKFF), 272–292 (IITL…FYDY), 294–314 (LLYI…TIII), 331–351 (YILT…GPIV), and 356–376 (IFSA…LVII).

Belongs to the major facilitator superfamily. TsgA family.

The protein resides in the cell membrane. This Buchnera aphidicola subsp. Baizongia pistaciae (strain Bp) protein is Protein TsgA homolog.